The sequence spans 311 residues: Methionyl-tRNA formyltransferase (311 aa).

110–113 contributes to the (6S)-5,6,7,8-tetrahydrofolate binding site; that stretch reads SLLP.

It belongs to the Fmt family.

The catalysed reaction is L-methionyl-tRNA(fMet) + (6R)-10-formyltetrahydrofolate = N-formyl-L-methionyl-tRNA(fMet) + (6S)-5,6,7,8-tetrahydrofolate + H(+). In terms of biological role, attaches a formyl group to the free amino group of methionyl-tRNA(fMet). The formyl group appears to play a dual role in the initiator identity of N-formylmethionyl-tRNA by promoting its recognition by IF2 and preventing the misappropriation of this tRNA by the elongation apparatus. The protein is Methionyl-tRNA formyltransferase of Streptococcus uberis (strain ATCC BAA-854 / 0140J).